A 384-amino-acid polypeptide reads, in one-letter code: tRNA(Met) cytidine acetate ligase (384 aa).

ATP-binding positions include 7 to 20, glycine 101, asparagine 153, and arginine 178; that span reads VAEY…HEFL.

Belongs to the TmcAL family.

The protein resides in the cytoplasm. The enzyme catalyses cytidine(34) in elongator tRNA(Met) + acetate + ATP = N(4)-acetylcytidine(34) in elongator tRNA(Met) + AMP + diphosphate. Its function is as follows. Catalyzes the formation of N(4)-acetylcytidine (ac(4)C) at the wobble position of elongator tRNA(Met), using acetate and ATP as substrates. First activates an acetate ion to form acetyladenylate (Ac-AMP) and then transfers the acetyl group to tRNA to form ac(4)C34. This Lactobacillus delbrueckii subsp. bulgaricus (strain ATCC 11842 / DSM 20081 / BCRC 10696 / JCM 1002 / NBRC 13953 / NCIMB 11778 / NCTC 12712 / WDCM 00102 / Lb 14) protein is tRNA(Met) cytidine acetate ligase.